The sequence spans 847 residues: B-cell receptor CD22 (847 aa).

A signal peptide spans 1–19 (MHLLGPWLLLLVLEYLAFS). An Ig-like V-type domain is found at 20–138 (DSSKWAFEHP…MERIHLNVSE (119 aa)). Residues 20–687 (DSSKWAFEHP…YYSPETIGRR (668 aa)) lie on the Extracellular side of the membrane. 3 N-linked (GlcNAc...) asparagine glycosylation sites follow: N67, N101, and N112. R120 contacts N-acetylneuraminate. N-linked (GlcNAc...) asparagine glycosylation is found at N135, N164, and N231. 6 Ig-like C2-type domains span residues 143–235 (PHIQ…DTVQ), 242–326 (PKLE…VFLQ), 331–416 (PEPS…LDVQ), 419–500 (PKKV…VALN), 505–582 (PRDV…QTAS), and 593–676 (PRRL…STLT). C161 and C219 are joined by a disulfide. 2 disulfides stabilise this stretch: C265–C309 and C353–C396. N363, N428, N445, N448, and N479 each carry an N-linked (GlcNAc...) asparagine glycan. 2 disulfides stabilise this stretch: C442/C484 and C529/C571. N574 and N634 each carry an N-linked (GlcNAc...) asparagine glycan. C616 and C659 are joined by a disulfide. Residues 688 to 708 (VAVGFGSCLAILILAICGLKL) traverse the membrane as a helical segment. Residues 709-847 (QRRWKRTQSQ…ENVDYVILKH (139 aa)) lie on the Cytoplasmic side of the membrane. S725, S726, and S729 each carry phosphoserine. Short sequence motifs (ITIM motif) lie at residues 760 to 765 (ISYTTL) and 794 to 799 (VTYSVL). Residue Y762 is modified to Phosphotyrosine. Residues Y807, Y822, and Y842 each carry the phosphotyrosine modification. 2 short sequence motifs (ITIM motif) span residues 820-825 (IHYSEL) and 840-845 (VDYVIL).

This sequence belongs to the immunoglobulin superfamily. SIGLEC (sialic acid binding Ig-like lectin) family. As to quaternary structure, predominantly monomer of isoform CD22-beta. Also found as heterodimer of isoform CD22-beta and a shorter isoform. Interacts with PTPN6/SHP-1, LYN, SYK, PIK3R1/PIK3R2 and PLCG1 upon phosphorylation. Interacts with GRB2, INPP5D and SHC1 upon phosphorylation. May form a complex with INPP5D/SHIP, GRB2 and SHC1. In terms of processing, phosphorylation of Tyr-762, Tyr-807 and Tyr-822 are involved in binding to SYK, GRB2 and SYK, respectively. Phosphorylation of Tyr-842 is involved in binding to SYK, PLCG2 and PIK3R1/PIK3R2. Phosphorylated on tyrosine residues by LYN.

The protein localises to the cell membrane. In terms of biological role, most highly expressed siglec (sialic acid-binding immunoglobulin-like lectin) on B-cells that plays a role in various aspects of B-cell biology including differentiation, antigen presentation, and trafficking to bone marrow. Binds to alpha 2,6-linked sialic acid residues of surface molecules such as CD22 itself, CD45 and IgM in a cis configuration. Can also bind to ligands on other cells as an adhesion molecule in a trans configuration. Acts as an inhibitory coreceptor on the surface of B-cells and inhibits B-cell receptor induced signaling, characterized by inhibition of the calcium mobilization and cellular activation. Mechanistically, the immunoreceptor tyrosine-based inhibitory motif domain is phosphorylated by the Src kinase LYN, which in turn leads to the recruitment of the protein tyrosine phosphatase 1/PTPN6, leading to the negative regulation of BCR signaling. If this negative signaling from is of sufficient strength, apoptosis of the B-cell can be induced. The polypeptide is B-cell receptor CD22 (Pan paniscus (Pygmy chimpanzee)).